Here is a 179-residue protein sequence, read N- to C-terminus: Large ribosomal subunit protein uL5 (179 aa).

This sequence belongs to the universal ribosomal protein uL5 family. In terms of assembly, part of the 50S ribosomal subunit; part of the 5S rRNA/L5/L18/L25 subcomplex. Contacts the 5S rRNA and the P site tRNA. Forms a bridge to the 30S subunit in the 70S ribosome.

Its function is as follows. This is one of the proteins that bind and probably mediate the attachment of the 5S RNA into the large ribosomal subunit, where it forms part of the central protuberance. In the 70S ribosome it contacts protein S13 of the 30S subunit (bridge B1b), connecting the 2 subunits; this bridge is implicated in subunit movement. Contacts the P site tRNA; the 5S rRNA and some of its associated proteins might help stabilize positioning of ribosome-bound tRNAs. This is Large ribosomal subunit protein uL5 from Shewanella frigidimarina (strain NCIMB 400).